The following is a 254-amino-acid chain: Triosephosphate isomerase (254 aa).

9–11 contacts substrate; sequence NWK. Histidine 96 serves as the catalytic Electrophile. The active-site Proton acceptor is glutamate 169. Residues glycine 175, serine 215, and 236 to 237 contribute to the substrate site; that span reads GG.

It belongs to the triosephosphate isomerase family. Homodimer.

It is found in the cytoplasm. The enzyme catalyses D-glyceraldehyde 3-phosphate = dihydroxyacetone phosphate. It participates in carbohydrate biosynthesis; gluconeogenesis. It functions in the pathway carbohydrate degradation; glycolysis; D-glyceraldehyde 3-phosphate from glycerone phosphate: step 1/1. Functionally, involved in the gluconeogenesis. Catalyzes stereospecifically the conversion of dihydroxyacetone phosphate (DHAP) to D-glyceraldehyde-3-phosphate (G3P). This Borrelia hermsii (strain HS1 / DAH) protein is Triosephosphate isomerase.